The sequence spans 70 residues: MTALAAGIAMLAGLGVGIGIGIATGKASESIGRQPEAFGRIFPLFLIGAALAEAVAIYSLVIAFMLISKI.

Helical transmembrane passes span 3–23 (ALAA…IGIA) and 44–64 (LFLI…VIAF).

This sequence belongs to the ATPase C chain family. F-type ATPases have 2 components, F(1) - the catalytic core - and F(0) - the membrane proton channel. F(1) has five subunits: alpha(3), beta(3), gamma(1), delta(1), epsilon(1). F(0) has three main subunits: a(1), b(2) and c(10-14). The alpha and beta chains form an alternating ring which encloses part of the gamma chain. F(1) is attached to F(0) by a central stalk formed by the gamma and epsilon chains, while a peripheral stalk is formed by the delta and b chains.

The protein resides in the cell membrane. F(1)F(0) ATP synthase produces ATP from ADP in the presence of a proton or sodium gradient. F-type ATPases consist of two structural domains, F(1) containing the extramembraneous catalytic core and F(0) containing the membrane proton channel, linked together by a central stalk and a peripheral stalk. During catalysis, ATP synthesis in the catalytic domain of F(1) is coupled via a rotary mechanism of the central stalk subunits to proton translocation. In terms of biological role, key component of the F(0) channel; it plays a direct role in translocation across the membrane. A homomeric c-ring of between 10-14 subunits forms the central stalk rotor element with the F(1) delta and epsilon subunits. This is ATP synthase subunit c from Caldicellulosiruptor bescii (strain ATCC BAA-1888 / DSM 6725 / KCTC 15123 / Z-1320) (Anaerocellum thermophilum).